Here is a 502-residue protein sequence, read N- to C-terminus: Maturase K (502 aa).

The protein belongs to the intron maturase 2 family. MatK subfamily.

The protein resides in the plastid. It is found in the chloroplast. Usually encoded in the trnK tRNA gene intron. Probably assists in splicing its own and other chloroplast group II introns. This is Maturase K from Ipomoea purpurea (Common morning glory).